The sequence spans 198 residues: Protein GrpE (198 aa).

The protein belongs to the GrpE family. As to quaternary structure, homodimer.

The protein resides in the cytoplasm. Functionally, participates actively in the response to hyperosmotic and heat shock by preventing the aggregation of stress-denatured proteins, in association with DnaK and GrpE. It is the nucleotide exchange factor for DnaK and may function as a thermosensor. Unfolded proteins bind initially to DnaJ; upon interaction with the DnaJ-bound protein, DnaK hydrolyzes its bound ATP, resulting in the formation of a stable complex. GrpE releases ADP from DnaK; ATP binding to DnaK triggers the release of the substrate protein, thus completing the reaction cycle. Several rounds of ATP-dependent interactions between DnaJ, DnaK and GrpE are required for fully efficient folding. The polypeptide is Protein GrpE (Vibrio harveyi (Beneckea harveyi)).